The primary structure comprises 399 residues: Tryptophan synthase beta chain (399 aa).

An N6-(pyridoxal phosphate)lysine modification is found at Lys-90.

The protein belongs to the TrpB family. Tetramer of two alpha and two beta chains. The cofactor is pyridoxal 5'-phosphate.

It carries out the reaction (1S,2R)-1-C-(indol-3-yl)glycerol 3-phosphate + L-serine = D-glyceraldehyde 3-phosphate + L-tryptophan + H2O. The protein operates within amino-acid biosynthesis; L-tryptophan biosynthesis; L-tryptophan from chorismate: step 5/5. The beta subunit is responsible for the synthesis of L-tryptophan from indole and L-serine. This Lactiplantibacillus plantarum (strain ATCC BAA-793 / NCIMB 8826 / WCFS1) (Lactobacillus plantarum) protein is Tryptophan synthase beta chain.